The following is a 620-amino-acid chain: Translation initiation factor IF-2 (620 aa).

Residues 119–288 enclose the tr-type G domain; that stretch reads ERPPIVTIMG…IILISELENL (170 aa). The segment at 128–135 is G1; that stretch reads GHVDHGKT. 128–135 is a binding site for GTP; sequence GHVDHGKT. Positions 153 to 157 are G2; that stretch reads GITQA. The tract at residues 175-178 is G3; that stretch reads DTPG. Residues 175–179 and 229–232 contribute to the GTP site; these read DTPGH and NKID. Residues 229 to 232 are G4; it reads NKID. Positions 265–267 are G5; sequence SAI.

The protein belongs to the TRAFAC class translation factor GTPase superfamily. Classic translation factor GTPase family. IF-2 subfamily.

It is found in the cytoplasm. Functionally, one of the essential components for the initiation of protein synthesis. Protects formylmethionyl-tRNA from spontaneous hydrolysis and promotes its binding to the 30S ribosomal subunits. Also involved in the hydrolysis of GTP during the formation of the 70S ribosomal complex. This is Translation initiation factor IF-2 from Mycoplasma capricolum subsp. capricolum (strain California kid / ATCC 27343 / NCTC 10154).